Here is a 130-residue protein sequence, read N- to C-terminus: Small ribosomal subunit protein uS8 (130 aa).

This sequence belongs to the universal ribosomal protein uS8 family. Part of the 30S ribosomal subunit.

Functionally, one of the primary rRNA binding proteins, it binds directly to 16S rRNA central domain where it helps coordinate assembly of the platform of the 30S subunit. The protein is Small ribosomal subunit protein uS8 of Methanoregula boonei (strain DSM 21154 / JCM 14090 / 6A8).